The chain runs to 364 residues: Metalloendoproteinase 1-MMP (364 aa).

Positions 1–28 are cleaved as a signal peptide; sequence MSRNLIYRRNRALCFVLILFCFPYRFGA. Residues 29–149 constitute a propeptide, activation peptide; it reads RNTPEAEQST…NNDFLHTTAH (121 aa). N-linked (GlcNAc...) asparagine glycosylation is present at asparagine 49. Residues 128 to 135 carry the Cysteine switch motif; that stretch reads PRCGVSDT. Cysteine 130 contributes to the Zn(2+) binding site. Aspartate 211 serves as a coordination point for Ca(2+). Residues histidine 221 and aspartate 223 each coordinate Zn(2+). Residues aspartate 228 and glycine 229 each coordinate Ca(2+). Histidine 236 contributes to the Zn(2+) binding site. Residue glycine 243 participates in Ca(2+) binding. Histidine 246 contacts Zn(2+). Residues aspartate 248 and glutamate 251 each coordinate Ca(2+). A Zn(2+)-binding site is contributed by histidine 275. Residue glutamate 276 is part of the active site. The Zn(2+) site is built by histidine 279 and histidine 285. Residue asparagine 338 is glycosylated (N-linked (GlcNAc...) asparagine). Glycine 339 carries the GPI-anchor amidated glycine lipid modification. The propeptide at 340–364 is removed in mature form; sequence TVSHRFLSGNFIGYVLLVVGLILFL.

The protein belongs to the peptidase M10A family. Matrix metalloproteinases (MMPs) subfamily. It depends on Ca(2+) as a cofactor. Zn(2+) serves as cofactor. In terms of tissue distribution, mostly expressed in flowers, roots and stems, and, to a lower extent, in leaves.

It localises to the cell membrane. With respect to regulation, inhibited by human TIMP-1 and TIMP-2 and by the peptide hydroxamate inhibitor (BB-94). Repressed by acetohydroxamic acid (AHA). Functionally, matrix metalloproteinases (MMPs) or matrixins may play a role in the degradation and remodeling of the extracellular matrix (ECM) during development or in response to stresses. Can cleave myelin basic protein as well as fluorigenic peptide substrates, McaPLANvaDpaAR-NH(2) and McaPChaGNvaHADpa-NH(2) 4-fold more efficiently than McaPLGLDpaAR-NH(2) (QF24). Active on myelin basic protein (MBP) and, to some extent, on McaPLGLDpaAR-NH(2) (QF24) and beta-casein. The chain is Metalloendoproteinase 1-MMP from Arabidopsis thaliana (Mouse-ear cress).